A 283-amino-acid polypeptide reads, in one-letter code: NAD kinase (283 aa).

D69 (proton acceptor) is an active-site residue. NAD(+)-binding positions include D69–G70, N138–E139, K166, D168, L176, T179–S184, and Q235.

Belongs to the NAD kinase family. A divalent metal cation serves as cofactor.

The protein localises to the cytoplasm. The enzyme catalyses NAD(+) + ATP = ADP + NADP(+) + H(+). Its function is as follows. Involved in the regulation of the intracellular balance of NAD and NADP, and is a key enzyme in the biosynthesis of NADP. Catalyzes specifically the phosphorylation on 2'-hydroxyl of the adenosine moiety of NAD to yield NADP. The chain is NAD kinase from Helicobacter acinonychis (strain Sheeba).